The following is a 255-amino-acid chain: Thiazole synthase (255 aa).

Residue lysine 95 is the Schiff-base intermediate with DXP of the active site. Residues glycine 156, 182-183 (AG), and 204-205 (NT) each bind 1-deoxy-D-xylulose 5-phosphate.

This sequence belongs to the ThiG family. Homotetramer. Forms heterodimers with either ThiH or ThiS.

It localises to the cytoplasm. It carries out the reaction [ThiS sulfur-carrier protein]-C-terminal-Gly-aminoethanethioate + 2-iminoacetate + 1-deoxy-D-xylulose 5-phosphate = [ThiS sulfur-carrier protein]-C-terminal Gly-Gly + 2-[(2R,5Z)-2-carboxy-4-methylthiazol-5(2H)-ylidene]ethyl phosphate + 2 H2O + H(+). The protein operates within cofactor biosynthesis; thiamine diphosphate biosynthesis. Catalyzes the rearrangement of 1-deoxy-D-xylulose 5-phosphate (DXP) to produce the thiazole phosphate moiety of thiamine. Sulfur is provided by the thiocarboxylate moiety of the carrier protein ThiS. In vitro, sulfur can be provided by H(2)S. The chain is Thiazole synthase from Vibrio campbellii (strain ATCC BAA-1116).